Reading from the N-terminus, the 885-residue chain is Lon protease homolog 2, peroxisomal (885 aa).

One can recognise a Lon N-terminal domain in the interval Leu12–Leu256. Residues Leu70–Pro104 are disordered. Positions Ser77–Val86 are enriched in gly residues. Basic and acidic residues predominate over residues Ser94–Pro104. Gly409–Thr416 contributes to the ATP binding site. The region spanning Val690 to Gly875 is the Lon proteolytic domain. Active-site residues include Ser781 and Lys824. The Microbody targeting signal signature appears at Ser883–Leu885.

This sequence belongs to the peptidase S16 family.

Its subcellular location is the peroxisome matrix. The catalysed reaction is Hydrolysis of proteins in presence of ATP.. Its function is as follows. ATP-dependent serine protease that mediates the selective degradation of misfolded and unassembled polypeptides in the peroxisomal matrix. Necessary for type 2 peroxisome targeting signal (PTS2)-containing protein processing and facilitates peroxisome matrix protein import. The protein is Lon protease homolog 2, peroxisomal (LON1) of Zea mays (Maize).